Here is a 146-residue protein sequence, read N- to C-terminus: NADH-quinone oxidoreductase subunit A (146 aa).

3 helical membrane-spanning segments follow: residues 14–34 (FALF…GGFL), 68–88 (LVAM…AWAV), and 96–116 (IGFI…IYLV).

This sequence belongs to the complex I subunit 3 family. NDH-1 is composed of 13 different subunits. Subunits NuoA, H, J, K, L, M, N constitute the membrane sector of the complex.

Its subcellular location is the cell inner membrane. The enzyme catalyses a quinone + NADH + 5 H(+)(in) = a quinol + NAD(+) + 4 H(+)(out). In terms of biological role, NDH-1 shuttles electrons from NADH, via FMN and iron-sulfur (Fe-S) centers, to quinones in the respiratory chain. The immediate electron acceptor for the enzyme in this species is believed to be ubiquinone. Couples the redox reaction to proton translocation (for every two electrons transferred, four hydrogen ions are translocated across the cytoplasmic membrane), and thus conserves the redox energy in a proton gradient. The chain is NADH-quinone oxidoreductase subunit A from Pectobacterium atrosepticum (strain SCRI 1043 / ATCC BAA-672) (Erwinia carotovora subsp. atroseptica).